A 300-amino-acid chain; its full sequence is Probable low-salt glycan biosynthesis reductase Agl14 (300 aa).

NADH contacts are provided by residues 10 to 12 (GLL), 46 to 47 (DI), and 70 to 72 (AYT). Residues 11–12 (LL), 46–47 (DI), 70–72 (AYT), Tyr109, Tyr135, and Lys139 contribute to the NADPH site. 2 residues coordinate NADH: Tyr135 and Lys139. The active-site Proton donor/acceptor is the Tyr135.

This sequence belongs to the dTDP-4-dehydrorhamnose reductase family.

It participates in protein modification; protein glycosylation. It functions in the pathway cell surface structure biogenesis; S-layer biogenesis. In terms of biological role, reductase involved in N-glycan biosynthetic pathway that takes place under low-salt conditions (1.75 M instead of 3.4 M). Participates in the formation of the tetrasaccharide present at 'Asn-532' of S-layer glycoprotein Csg, consisting of a sulfated hexose, 2 hexoses and rhamnose. Involved in the addition of final rhamnose (sugar 4) of the tetrasaccharide on the dolichol phosphate carrier. This Haloferax volcanii (strain ATCC 29605 / DSM 3757 / JCM 8879 / NBRC 14742 / NCIMB 2012 / VKM B-1768 / DS2) (Halobacterium volcanii) protein is Probable low-salt glycan biosynthesis reductase Agl14 (agl14).